Here is a 1099-residue protein sequence, read N- to C-terminus: Protein transport protein Sec24A (1099 aa).

Disordered regions lie at residues 1 to 36 (MSQP…GPVQ), 65 to 139 (KTLN…LPGA), and 279 to 317 (SQPT…AGLP). Polar residues-rich tracts occupy residues 10-20 (GGSSTGLQAQN), 68-90 (NPVS…NYQG), 108-126 (SLHS…QNPA), 279-292 (SQPT…SRSV), and 303-317 (YQNT…AGLP). Cys437, Cys440, Cys458, and Cys461 together coordinate Zn(2+). The segment at 437–461 (CRSCRTYINPFVSFLDQRRWKCNLC) is zinc finger-like. Residues 972–1044 (PQPPILQLSV…TPESARTIAF (73 aa)) form a Gelsolin-like repeat.

The protein belongs to the SEC23/SEC24 family. SEC24 subfamily. As to quaternary structure, COPII is composed of at least five proteins: the Sec23/24 complex, the Sec13/31 complex and Sar1. Interacts with TMED2. Interacts (as part of the Sec23/24 complex) with SEC22B; recruits SEC22B into COPII-coated vesicles for its transport from the endoplasmic reticulum to the Golgi. Interacts with STING1; promoting STING1 translocation to COPII vesicles in a STEEP1-dependent manner. Interacts with TMEM39A. Interacts with SACM1L; this interaction is reduced in the absence of TMEM39A. Interacts with kinase FAM20C; transport of FAM20C from the endoplasmic reticulum to the Golgi is likely to be mediated by COPII vesicles.

The protein resides in the cytoplasmic vesicle. The protein localises to the COPII-coated vesicle membrane. Its subcellular location is the endoplasmic reticulum membrane. It is found in the cytoplasm. It localises to the cytosol. Component of the coat protein complex II (COPII) which promotes the formation of transport vesicles from the endoplasmic reticulum (ER). The coat has two main functions, the physical deformation of the endoplasmic reticulum membrane into vesicles and the selection of cargo molecules for their transport to the Golgi complex. Plays a central role in cargo selection within the COPII complex and together with SEC24B may have a different specificity compared to SEC24C and SEC24D. May package preferentially cargos with cytoplasmic DxE or LxxLE motifs and may also recognize conformational epitopes. This Bos taurus (Bovine) protein is Protein transport protein Sec24A.